The chain runs to 473 residues: MKTLYSLRRFYHVETLFNGTLALTGRDQETTGFAWWAGNARLINLSGKLLGAHVAHAGLIVFWAGAMNLFEVAHFVPEKPMYEQGLILLPHLATLGWGVGPGGEVIDTFPYFVSGVLHLISSAVLGFGGIYHALLGPETLEESFPFFGYVWKDRNKMTTILGIHLILLGIGSFLLVFKAFYFGGIYDTWAPGGGDVRKITNFTLSPSILFGYLLKSPFGGEGWIVSVDDLEDIIGGHVWLGSICILGGIWHILTKPFAWARRALVWSGEAYLSYSLGALAVFGFIACCFVWFNNTAYPSEFYGPTGPEASQAQAFTFLVRDQRLGANVGSAQGPTGLGKYLMRSPTGEVIFGGETMRFWDLRAPWLEPLRGPNGLDLSRLKKDIQPWQERRSAEYMTHAPLGSLNSVGGVATEINAVNYVSPRSWLATSHFVLGFFLFVGHLWHAGRARAAAAGFEKGIDRDFEPVLSMTPLN.

Positions M1–E14 are excised as a propeptide. N-acetylthreonine is present on T15. T15 carries the phosphothreonine modification. 5 consecutive transmembrane segments (helical) span residues L69–A93, L134–N155, K178–T200, K255–S275, and W291–A312. E367 lines the [CaMn4O5] cluster pocket. The chain crosses the membrane as a helical span at residues R447–P471.

Belongs to the PsbB/PsbC family. PsbC subfamily. In terms of assembly, PSII is composed of 1 copy each of membrane proteins PsbA, PsbB, PsbC, PsbD, PsbE, PsbF, PsbH, PsbI, PsbJ, PsbK, PsbL, PsbM, PsbT, PsbX, PsbY, PsbZ, Psb30/Ycf12, at least 3 peripheral proteins of the oxygen-evolving complex and a large number of cofactors. It forms dimeric complexes. Binds multiple chlorophylls and provides some of the ligands for the Ca-4Mn-5O cluster of the oxygen-evolving complex. It may also provide a ligand for a Cl- that is required for oxygen evolution. PSII binds additional chlorophylls, carotenoids and specific lipids. is required as a cofactor.

It localises to the plastid. Its subcellular location is the chloroplast thylakoid membrane. Its function is as follows. One of the components of the core complex of photosystem II (PSII). It binds chlorophyll and helps catalyze the primary light-induced photochemical processes of PSII. PSII is a light-driven water:plastoquinone oxidoreductase, using light energy to abstract electrons from H(2)O, generating O(2) and a proton gradient subsequently used for ATP formation. The chain is Photosystem II CP43 reaction center protein from Pisum sativum (Garden pea).